We begin with the raw amino-acid sequence, 380 residues long: NADPH quinone oxidoreductase (380 aa).

Residues 1-17 (MSSFLSKRFISTTQRAM) constitute a mitochondrion transit peptide.

This sequence belongs to the zinc-containing alcohol dehydrogenase family. Quinone oxidoreductase subfamily. In terms of assembly, homodimer.

It localises to the mitochondrion. The catalysed reaction is a quinone + NADH + H(+) = a quinol + NAD(+). It catalyses the reaction a quinone + NADPH + H(+) = a quinol + NADP(+). Functionally, NADPH quinone oxidoreductase that efficiently reduces 1,4-benzoquinone, whereas no activities are found for menadiones and methoxyquinones. The polypeptide is NADPH quinone oxidoreductase (Kluyveromyces marxianus (Yeast)).